Here is a 156-residue protein sequence, read N- to C-terminus: 3-hydroxyacyl-[acyl-carrier-protein] dehydratase FabZ (156 aa).

The active site involves His-61.

Belongs to the thioester dehydratase family. FabZ subfamily.

It localises to the cytoplasm. The catalysed reaction is a (3R)-hydroxyacyl-[ACP] = a (2E)-enoyl-[ACP] + H2O. Functionally, involved in unsaturated fatty acids biosynthesis. Catalyzes the dehydration of short chain beta-hydroxyacyl-ACPs and long chain saturated and unsaturated beta-hydroxyacyl-ACPs. This chain is 3-hydroxyacyl-[acyl-carrier-protein] dehydratase FabZ, found in Acaryochloris marina (strain MBIC 11017).